The sequence spans 431 residues: Enolase (431 aa).

Residue Q163 coordinates (2R)-2-phosphoglycerate. Residue E205 is the Proton donor of the active site. Mg(2+) contacts are provided by D242, E288, and D315. (2R)-2-phosphoglycerate is bound by residues K340, R369, S370, and K391. Catalysis depends on K340, which acts as the Proton acceptor.

It belongs to the enolase family. The cofactor is Mg(2+).

The protein localises to the cytoplasm. It localises to the secreted. It is found in the cell surface. It carries out the reaction (2R)-2-phosphoglycerate = phosphoenolpyruvate + H2O. Its pathway is carbohydrate degradation; glycolysis; pyruvate from D-glyceraldehyde 3-phosphate: step 4/5. In terms of biological role, catalyzes the reversible conversion of 2-phosphoglycerate (2-PG) into phosphoenolpyruvate (PEP). It is essential for the degradation of carbohydrates via glycolysis. This Bacillus cereus (strain B4264) protein is Enolase.